The sequence spans 443 residues: Pentatricopeptide repeat-containing protein 6, mitochondrial (443 aa).

The N-terminal 13 residues, 1 to 13, are a transit peptide targeting the mitochondrion; sequence MRILGSLPNNIRK. PPR repeat units follow at residues 130-164 and 220-254; these read NIVD…RIRP and NSTT…NENS.

It is found in the mitochondrion. Mitochondrial RNA-binding protein required for the stability of the atp9 mRNA. This is Pentatricopeptide repeat-containing protein 6, mitochondrial (ppr6) from Schizosaccharomyces pombe (strain 972 / ATCC 24843) (Fission yeast).